Here is a 208-residue protein sequence, read N- to C-terminus: Uracil phosphoribosyltransferase (208 aa).

5-phospho-alpha-D-ribose 1-diphosphate-binding positions include Arg-78, Arg-103, and 130–138 (DPMLATGGS). Uracil contacts are provided by residues Ile-193 and 198 to 200 (GDA). Asp-199 lines the 5-phospho-alpha-D-ribose 1-diphosphate pocket.

It belongs to the UPRTase family. Requires Mg(2+) as cofactor.

It carries out the reaction UMP + diphosphate = 5-phospho-alpha-D-ribose 1-diphosphate + uracil. It functions in the pathway pyrimidine metabolism; UMP biosynthesis via salvage pathway; UMP from uracil: step 1/1. Allosterically activated by GTP. Catalyzes the conversion of uracil and 5-phospho-alpha-D-ribose 1-diphosphate (PRPP) to UMP and diphosphate. The polypeptide is Uracil phosphoribosyltransferase (Colwellia psychrerythraea (strain 34H / ATCC BAA-681) (Vibrio psychroerythus)).